A 197-amino-acid chain; its full sequence is Protein SYM1 (197 aa).

The next 4 membrane-spanning stretches (helical) occupy residues 20 to 40 (AIMT…LFPT), 55 to 75 (AVIY…KILN), 97 to 117 (VDQL…MSIM), and 137 to 157 (LLTN…VVPL).

This sequence belongs to the peroxisomal membrane protein PXMP2/4 family.

The protein resides in the mitochondrion inner membrane. Its function is as follows. May be involved in cellular response to stress. Required to maintain mitochondrial DNA (mtDNA) integrity and stability. Required for ethanol metabolism and tolerance during heat shock. This is Protein SYM1 (SYM1) from Saccharomyces cerevisiae (strain ATCC 204508 / S288c) (Baker's yeast).